The sequence spans 440 residues: (S)-N-methylcoclaurine 3'-hydroxylase-like protein (440 aa).

Residues 2–21 (EIVTVALIAIVFTTFLYLIV) form a helical; Signal-anchor for type II membrane protein membrane-spanning segment. Cys430 lines the heme pocket.

It belongs to the cytochrome P450 family. It depends on heme as a cofactor.

It is found in the membrane. In terms of biological role, involved in the biosynthesis of benzylisoquinoline alkaloids. Probably involved in papaverine biosynthesis since its transcripts are abundant only in cultivars with substantial papaverine accumulation. May catalyze the 3'-hydroxylation of (S)-coclaurine. This chain is (S)-N-methylcoclaurine 3'-hydroxylase-like protein, found in Papaver somniferum (Opium poppy).